The sequence spans 106 residues: Putative double-stranded DNA mimic protein VP1949 (106 aa).

The protein belongs to the putative dsDNA mimic protein family.

In terms of biological role, may act as a double-stranded DNA (dsDNA) mimic. Probably regulates the activity of a dsDNA-binding protein. This is Putative double-stranded DNA mimic protein VP1949 from Vibrio parahaemolyticus serotype O3:K6 (strain RIMD 2210633).